A 180-amino-acid chain; its full sequence is ADP-ribosylation factor 4 (180 aa).

Residue G2 is the site of N-myristoyl glycine attachment. Residues 24–31, 67–71, and 126–129 contribute to the GTP site; these read GLDAAGKT, DVGGQ, and NKQD. S147 carries the phosphoserine modification.

This sequence belongs to the small GTPase superfamily. Arf family. Forms a complex containing RAB11A, ASAP1, RAB3IP, RAP11FIP3 and ARF4; the complex promotes preciliary trafficking; the complex binds to RHO in photoreceptor cells and promotes RHO ciliary transport.

The protein resides in the golgi apparatus. It is found in the membrane. Functionally, GTP-binding protein that functions as an allosteric activator of the cholera toxin catalytic subunit, an ADP-ribosyltransferase. Involved in protein trafficking; may modulate vesicle budding and uncoating within the Golgi apparatus. Part of the ciliary targeting complex containing Rab11, ASAP1, Rabin8/RAB3IP, RAB11FIP3 and ARF4, which direct preciliary vesicle trafficking to mother centriole and ciliogenesis initiation. In Homo sapiens (Human), this protein is ADP-ribosylation factor 4 (ARF4).